Consider the following 400-residue polypeptide: 3-phenylpropionate/cinnamic acid dioxygenase ferredoxin--NAD(+) reductase component (400 aa).

5-36 (TIIIVGGGQAAAMAAASLRQQGFTGELHLFSD) contributes to the FAD binding site. 146–174 (SVVIVGAGTIGLELAASATQRGCKVTVIE) is an NAD(+) binding site.

Belongs to the bacterial ring-hydroxylating dioxygenase ferredoxin reductase family. As to quaternary structure, this dioxygenase system consists of four proteins: the two subunits of the hydroxylase component (HcaE and HcaF), a ferredoxin (HcaC) and a ferredoxin reductase (HcaD). Requires FAD as cofactor.

The catalysed reaction is 2 reduced [2Fe-2S]-[ferredoxin] + NAD(+) + H(+) = 2 oxidized [2Fe-2S]-[ferredoxin] + NADH. It functions in the pathway aromatic compound metabolism; 3-phenylpropanoate degradation. Its function is as follows. Part of the multicomponent 3-phenylpropionate dioxygenase, that converts 3-phenylpropionic acid (PP) and cinnamic acid (CI) into 3-phenylpropionate-dihydrodiol (PP-dihydrodiol) and cinnamic acid-dihydrodiol (CI-dihydrodiol), respectively. This chain is 3-phenylpropionate/cinnamic acid dioxygenase ferredoxin--NAD(+) reductase component, found in Escherichia coli O17:K52:H18 (strain UMN026 / ExPEC).